A 289-amino-acid chain; its full sequence is Phosphatidylglycerol--prolipoprotein diacylglyceryl transferase (289 aa).

7 helical membrane passes run 23–43 (ALHWYGLMYLVGFVFAMWLAV), 61–81 (LLYMGFLGVFVGGRLGYVLFY), 99–119 (GGMSFHGGLMGVICVMLWFAH), 125–145 (FFQVADFIAPLIPFGLGAGRL), 199–219 (SQLYQMMLEGVALFIILNLFI), 226–246 (GSVSGLFLICYGMFRIITEFF), and 259–279 (LFSMGQILSLPMVLAGILMMV). Arg-144 serves as a coordination point for a 1,2-diacyl-sn-glycero-3-phospho-(1'-sn-glycerol).

This sequence belongs to the Lgt family.

The protein localises to the cell inner membrane. The catalysed reaction is L-cysteinyl-[prolipoprotein] + a 1,2-diacyl-sn-glycero-3-phospho-(1'-sn-glycerol) = an S-1,2-diacyl-sn-glyceryl-L-cysteinyl-[prolipoprotein] + sn-glycerol 1-phosphate + H(+). Its pathway is protein modification; lipoprotein biosynthesis (diacylglyceryl transfer). Catalyzes the transfer of the diacylglyceryl group from phosphatidylglycerol to the sulfhydryl group of the N-terminal cysteine of a prolipoprotein, the first step in the formation of mature lipoproteins. The protein is Phosphatidylglycerol--prolipoprotein diacylglyceryl transferase of Pectobacterium atrosepticum (strain SCRI 1043 / ATCC BAA-672) (Erwinia carotovora subsp. atroseptica).